We begin with the raw amino-acid sequence, 362 residues long: PDZ and LIM domain protein 3 (362 aa).

The PDZ domain maps to 1 to 84; it reads MPQNVVLPGP…QLCLKIDRAE (84 aa). Residues Ser-18, Ser-92, and Ser-263 each carry the phosphoserine modification. Positions 261–282 are disordered; that stretch reads DGSDDRPAGTRSVRPVTKVHGG. The LIM zinc-binding domain occupies 290-349; that stretch reads PLCDKCGSGIVGAVVKARDKYRHPECFVCADCNLNLKQKGYFFVEGELYCEMHARARTRP.

In terms of assembly, interacts with ACTN2. Forms a heterodimer with PDLIM4 (via LIM domain). Highly expressed in skeletal muscle and at low levels in the heart.

It localises to the cytoplasm. The protein resides in the myofibril. It is found in the sarcomere. Its subcellular location is the z line. In terms of biological role, may play a role in the organization of actin filament arrays within muscle cells. In Rattus norvegicus (Rat), this protein is PDZ and LIM domain protein 3 (Pdlim3).